The chain runs to 244 residues: ATP synthase subunit a (244 aa).

6 consecutive transmembrane segments (helical) span residues 25–45 (ISFTNASLFMVISSLAILLIF), 85–105 (YFAFIFSIFMFVLFCNMFGMI), 115–135 (IIVTFILASFIFVGVTIIGFM), 144–164 (LFVPSGVPAVLLPLIVVIEII), 193–213 (GFVISLGIVGGWLPLSFSVAL), and 216–236 (LEILVAFLQAYVFAILTCIYL).

It belongs to the ATPase A chain family. As to quaternary structure, F-type ATPases have 2 components, CF(1) - the catalytic core - and CF(0) - the membrane proton channel. CF(1) has five subunits: alpha(3), beta(3), gamma(1), delta(1), epsilon(1). CF(0) has three main subunits: a(1), b(2) and c(9-12). The alpha and beta chains form an alternating ring which encloses part of the gamma chain. CF(1) is attached to CF(0) by a central stalk formed by the gamma and epsilon chains, while a peripheral stalk is formed by the delta and b chains.

Its subcellular location is the cell inner membrane. Its function is as follows. Key component of the proton channel; it plays a direct role in the translocation of protons across the membrane. The polypeptide is ATP synthase subunit a (Pelagibacter ubique (strain HTCC1062)).